Here is a 349-residue protein sequence, read N- to C-terminus: S-adenosylmethionine decarboxylase proenzyme 3 (349 aa).

Active-site residues include Glu-9 and Glu-12. Glu-68 contributes to the substrate binding site. Ser-69 (schiff-base intermediate with substrate; via pyruvic acid) is an active-site residue. Ser-69 is modified (pyruvic acid (Ser); by autocatalysis). Cys-83 (proton donor; for catalytic activity) is an active-site residue. Catalysis depends on proton acceptor; for processing activity residues Ser-235 and His-248. Glu-252 provides a ligand contact to substrate.

The protein belongs to the eukaryotic AdoMetDC family. It depends on pyruvate as a cofactor. Post-translationally, is synthesized initially as an inactive proenzyme. Formation of the active enzyme involves a self-maturation process in which the active site pyruvoyl group is generated from an internal serine residue via an autocatalytic post-translational modification. Two non-identical subunits are generated from the proenzyme in this reaction, and the pyruvate is formed at the N-terminus of the alpha chain, which is derived from the carboxyl end of the proenzyme. The post-translation cleavage follows an unusual pathway, termed non-hydrolytic serinolysis, in which the side chain hydroxyl group of the serine supplies its oxygen atom to form the C-terminus of the beta chain, while the remainder of the serine residue undergoes an oxidative deamination to produce ammonia and the pyruvoyl group blocking the N-terminus of the alpha chain.

The catalysed reaction is S-adenosyl-L-methionine + H(+) = S-adenosyl 3-(methylsulfanyl)propylamine + CO2. It functions in the pathway amine and polyamine biosynthesis; S-adenosylmethioninamine biosynthesis; S-adenosylmethioninamine from S-adenosyl-L-methionine: step 1/1. Its function is as follows. Essential for biosynthesis of the polyamines spermidine and spermine. Essential for polyamine homeostasis, and normal plant embryogenesis, growth and development. The sequence is that of S-adenosylmethionine decarboxylase proenzyme 3 from Arabidopsis thaliana (Mouse-ear cress).